The chain runs to 254 residues: NAD-dependent protein deacylase (254 aa).

Positions 1–250 (MERLEEARKR…LPPSPEDQAE (250 aa)) constitute a Deacetylase sirtuin-type domain. 22–41 (GAGISKPSGIPTFRDAEGLW) contributes to the NAD(+) binding site. Substrate-binding residues include Tyr66 and Arg69. 104-107 (QNVD) provides a ligand contact to NAD(+). The Proton acceptor role is filled by His122. Residues Cys130, Cys133, Cys149, and Cys152 each contribute to the Zn(2+) site. Residues 189-191 (GTS), 215-217 (NPE), and Ala233 contribute to the NAD(+) site.

The protein belongs to the sirtuin family. Class III subfamily. Zn(2+) serves as cofactor.

It localises to the cytoplasm. It catalyses the reaction N(6)-acetyl-L-lysyl-[protein] + NAD(+) + H2O = 2''-O-acetyl-ADP-D-ribose + nicotinamide + L-lysyl-[protein]. It carries out the reaction N(6)-succinyl-L-lysyl-[protein] + NAD(+) + H2O = 2''-O-succinyl-ADP-D-ribose + nicotinamide + L-lysyl-[protein]. Functionally, NAD-dependent lysine deacetylase and desuccinylase that specifically removes acetyl and succinyl groups on target proteins. Modulates the activities of several proteins which are inactive in their acylated form. The sequence is that of NAD-dependent protein deacylase from Thermus thermophilus (strain ATCC 27634 / DSM 579 / HB8).